A 263-amino-acid polypeptide reads, in one-letter code: Endonuclease 8 (263 aa).

Residue Pro2 is the Schiff-base intermediate with DNA of the active site. Glu3 functions as the Proton donor in the catalytic mechanism. The active-site Proton donor; for beta-elimination activity is the Lys53. DNA contacts are provided by Gln70, Arg125, and Asn169. An FPG-type zinc finger spans residues 229–263 (KVFHRDGEPCERCGSIIEKTTLSSRPFYWCPGCQH). The active-site Proton donor; for delta-elimination activity is Arg253.

Belongs to the FPG family. Zn(2+) serves as cofactor.

It catalyses the reaction 2'-deoxyribonucleotide-(2'-deoxyribose 5'-phosphate)-2'-deoxyribonucleotide-DNA = a 3'-end 2'-deoxyribonucleotide-(2,3-dehydro-2,3-deoxyribose 5'-phosphate)-DNA + a 5'-end 5'-phospho-2'-deoxyribonucleoside-DNA + H(+). In terms of biological role, involved in base excision repair of DNA damaged by oxidation or by mutagenic agents. Acts as a DNA glycosylase that recognizes and removes damaged bases. Has a preference for oxidized pyrimidines, such as thymine glycol, 5,6-dihydrouracil and 5,6-dihydrothymine. Has AP (apurinic/apyrimidinic) lyase activity and introduces nicks in the DNA strand. Cleaves the DNA backbone by beta-delta elimination to generate a single-strand break at the site of the removed base with both 3'- and 5'-phosphates. This chain is Endonuclease 8, found in Escherichia coli O9:H4 (strain HS).